The following is a 341-amino-acid chain: Glycerol-3-phosphate dehydrogenase [NAD(P)+] (341 aa).

Serine 14, phenylalanine 15, arginine 35, and lysine 108 together coordinate NADPH. 2 residues coordinate sn-glycerol 3-phosphate: lysine 108 and glycine 136. NADPH is bound at residue alanine 140. Residues lysine 191, aspartate 244, serine 254, arginine 255, and asparagine 256 each coordinate sn-glycerol 3-phosphate. Residue lysine 191 is the Proton acceptor of the active site. NADPH is bound at residue arginine 255. NADPH-binding residues include valine 279 and glutamate 281.

It belongs to the NAD-dependent glycerol-3-phosphate dehydrogenase family.

Its subcellular location is the cytoplasm. It catalyses the reaction sn-glycerol 3-phosphate + NAD(+) = dihydroxyacetone phosphate + NADH + H(+). The enzyme catalyses sn-glycerol 3-phosphate + NADP(+) = dihydroxyacetone phosphate + NADPH + H(+). Its pathway is membrane lipid metabolism; glycerophospholipid metabolism. Its function is as follows. Catalyzes the reduction of the glycolytic intermediate dihydroxyacetone phosphate (DHAP) to sn-glycerol 3-phosphate (G3P), the key precursor for phospholipid synthesis. This Pseudomonas entomophila (strain L48) protein is Glycerol-3-phosphate dehydrogenase [NAD(P)+].